The chain runs to 117 residues: uncharacterized protein (117 aa).

This is an uncharacterized protein from Bacillus subtilis (strain 168).